The sequence spans 496 residues: Probable cytosol aminopeptidase (496 aa).

2 residues coordinate Mn(2+): Lys251 and Asp256. The active site involves Lys263. Mn(2+) contacts are provided by Asp274, Asp333, and Glu335. Residue Arg337 is part of the active site.

The protein belongs to the peptidase M17 family. Requires Mn(2+) as cofactor.

It localises to the cytoplasm. It catalyses the reaction Release of an N-terminal amino acid, Xaa-|-Yaa-, in which Xaa is preferably Leu, but may be other amino acids including Pro although not Arg or Lys, and Yaa may be Pro. Amino acid amides and methyl esters are also readily hydrolyzed, but rates on arylamides are exceedingly low.. The enzyme catalyses Release of an N-terminal amino acid, preferentially leucine, but not glutamic or aspartic acids.. In terms of biological role, presumably involved in the processing and regular turnover of intracellular proteins. Catalyzes the removal of unsubstituted N-terminal amino acids from various peptides. This chain is Probable cytosol aminopeptidase, found in Acidovorax ebreus (strain TPSY) (Diaphorobacter sp. (strain TPSY)).